The primary structure comprises 411 residues: Flavohemoprotein (411 aa).

The 138-residue stretch at 5-142 (TLSQETKQIV…IADVFIQVEK (138 aa)) folds into the Globin domain. Position 89 (His-89) interacts with heme b. Active-site charge relay system residues include Tyr-99 and Glu-141. The tract at residues 153–411 (GGWREFRSFV…FGPAGTLASS (259 aa)) is reductase. The 112-residue stretch at 156–267 (REFRSFVVEK…TAPAGDFTLQ (112 aa)) folds into the FAD-binding FR-type domain. FAD-binding positions include Tyr-194 and 210 to 213 (RQYS). 280–285 (GVGITP) contributes to the NADP(+) binding site. 401 to 404 (FFGP) contacts FAD.

Belongs to the globin family. Two-domain flavohemoproteins subfamily. This sequence in the C-terminal section; belongs to the flavoprotein pyridine nucleotide cytochrome reductase family. The cofactor is heme b. FAD is required as a cofactor.

The catalysed reaction is 2 nitric oxide + NADPH + 2 O2 = 2 nitrate + NADP(+) + H(+). It carries out the reaction 2 nitric oxide + NADH + 2 O2 = 2 nitrate + NAD(+) + H(+). Functionally, is involved in NO detoxification in an aerobic process, termed nitric oxide dioxygenase (NOD) reaction that utilizes O(2) and NAD(P)H to convert NO to nitrate, which protects the bacterium from various noxious nitrogen compounds. Therefore, plays a central role in the inducible response to nitrosative stress. The chain is Flavohemoprotein from Halalkalibacterium halodurans (strain ATCC BAA-125 / DSM 18197 / FERM 7344 / JCM 9153 / C-125) (Bacillus halodurans).